The primary structure comprises 291 residues: UTP--glucose-1-phosphate uridylyltransferase (291 aa).

This sequence belongs to the UDPGP type 2 family.

It catalyses the reaction alpha-D-glucose 1-phosphate + UTP + H(+) = UDP-alpha-D-glucose + diphosphate. May play a role in stationary phase survival. The chain is UTP--glucose-1-phosphate uridylyltransferase (galU) from Mycoplasma pneumoniae (strain ATCC 29342 / M129 / Subtype 1) (Mycoplasmoides pneumoniae).